The chain runs to 149 residues: Transcriptional repressor NrdR (149 aa).

Residues 3–34 fold into a zinc finger; the sequence is CPFCSHLETQVIETRVFEDAASIRRRRQCAAC. The ATP-cone domain occupies 49 to 139; that stretch reads PAVVKKDGRR…VYRSFEGIDD (91 aa).

This sequence belongs to the NrdR family. The cofactor is Zn(2+).

Its function is as follows. Negatively regulates transcription of bacterial ribonucleotide reductase nrd genes and operons by binding to NrdR-boxes. The protein is Transcriptional repressor NrdR of Verminephrobacter eiseniae (strain EF01-2).